A 122-amino-acid polypeptide reads, in one-letter code: Large ribosomal subunit protein bL17 (122 aa).

This sequence belongs to the bacterial ribosomal protein bL17 family. Part of the 50S ribosomal subunit. Contacts protein L32.

The protein is Large ribosomal subunit protein bL17 of Neisseria meningitidis serogroup B (strain ATCC BAA-335 / MC58).